The primary structure comprises 504 residues: MAERKVRVRFAPSPTGALHIGGVRTALYNYLFARQHGGDLIFRIEDTDSNRFVPGAEEYILESFKWLGIHFDEGVSFGGEHGPYRQSERREIYKKYVQILLDNDKAYIAFDTPEELDAKRAEIANFQYDASTRGMMRNSLTMSKEEVDALIAEGKQYVVRFKIEPNEDVHVNDLIRGEVVINSSILDDKVLYKSADELPTYHLANIVDDHLMEVSHVIRGEEWLPSAPLHVLLYRAFGWEDTMPEFAHLPLLLKPEGNGKLSKRDGDRLGFPVFPLEWRPESGEVSSGYRESGYLPEAVINFLALLGWNPGNDQEVMSMDEMIKLFDIHRCSKSGAKFDYKKGIWFNHQYIQLKPNEEIAELFLPVLKEHGVEAPFEKVVTVVGMMKDRVSFIKELWDVCSFFFVAPAEYDEKTVKKRWKEDSAKCMTELAEVIAGIEDFSIEGQEKVVMDWIAEKGYHTGNIMNAFRLTLVGEGKGPHMFDISWVLGKEETLARMKRAVEVLK.

The short motif at 12-22 (PSPTGALHIGG) is the 'HIGH' region element. Positions 260 to 264 (KLSKR) match the 'KMSKS' region motif. Lys-263 contacts ATP.

Belongs to the class-I aminoacyl-tRNA synthetase family. Glutamate--tRNA ligase type 1 subfamily. As to quaternary structure, monomer.

Its subcellular location is the cytoplasm. It catalyses the reaction tRNA(Glu) + L-glutamate + ATP = L-glutamyl-tRNA(Glu) + AMP + diphosphate. Catalyzes the attachment of glutamate to tRNA(Glu) in a two-step reaction: glutamate is first activated by ATP to form Glu-AMP and then transferred to the acceptor end of tRNA(Glu). This is Glutamate--tRNA ligase from Bacteroides thetaiotaomicron (strain ATCC 29148 / DSM 2079 / JCM 5827 / CCUG 10774 / NCTC 10582 / VPI-5482 / E50).